A 380-amino-acid polypeptide reads, in one-letter code: Kappa-type opioid receptor (380 aa).

Residues 1-57 are Extracellular-facing; that stretch reads MGRRRQGPAQPASELPARNACLLPNGSAWLPGWAEPDGNGSAGPQDEQLEPAHISPA. Residues Asn-25 and Asn-39 are each glycosylated (N-linked (GlcNAc...) asparagine). Residues 58-85 traverse the membrane as a helical segment; it reads IPVIITAVYSVVFVVGLVGNSLVMFVII. Residues 86-95 are Cytoplasmic-facing; that stretch reads RYTKMKTATN. A helical transmembrane segment spans residues 96–119; that stretch reads IYIFNLALADALVTTTMPFQSTVY. The Extracellular segment spans residues 120–132; the sequence is LMNSWPFGDVLCK. Residues Cys-131 and Cys-210 are joined by a disulfide bond. A helical transmembrane segment spans residues 133-154; the sequence is IVISIDYYNMFTSIFTLTMMSV. Residues 155–173 lie on the Cytoplasmic side of the membrane; the sequence is DRYIAVCHPVKALDFRTPL. The chain crosses the membrane as a helical span at residues 174–196; sequence KAKIINICIWLLSSSVGISAIIL. Topologically, residues 197 to 222 are extracellular; that stretch reads GGTKVREDVDIIECSLQFPDDDYSWW. Residues 223–247 form a helical membrane-spanning segment; sequence DLFMKICVFVFAFVIPVLIIIVCYT. Over 248–274 the chain is Cytoplasmic; it reads LMILRLKSVRLLSGSREKDRNLRRITR. Residues 275-296 form a helical membrane-spanning segment; the sequence is LVLVVVAVFIICWTPIHIFILV. The Extracellular portion of the chain corresponds to 297-311; sequence EALGSTSHSTAALSS. A helical transmembrane segment spans residues 312 to 333; it reads YYFCIALGYTNSSLNPILYAFL. Residues 334-380 are Cytoplasmic-facing; sequence DENFKRCFRDFCFPIKMRMERQSTSRVRNTVQDPAYMRNVDGVNKPV. The S-palmitoyl cysteine moiety is linked to residue Cys-345.

The protein belongs to the G-protein coupled receptor 1 family. As to quaternary structure, interacts with NHERF1. Interacts with GABARAPL1.

Its subcellular location is the cell membrane. G-protein coupled opioid receptor that functions as a receptor for endogenous alpha-neoendorphins and dynorphins, but has low affinity for beta-endorphins. Also functions as a receptor for various synthetic opioids and for the psychoactive diterpene salvinorin A. Ligand binding causes a conformation change that triggers signaling via guanine nucleotide-binding proteins (G proteins) and modulates the activity of down-stream effectors, such as adenylate cyclase. Signaling leads to the inhibition of adenylate cyclase activity. Inhibits neurotransmitter release by reducing calcium ion currents and increasing potassium ion conductance. Plays a role in the perception of pain. Plays a role in mediating reduced physical activity upon treatment with synthetic opioids. Plays a role in the regulation of salivation in response to synthetic opioids. May play a role in arousal and regulation of autonomic and neuroendocrine functions. The sequence is that of Kappa-type opioid receptor (OPRK1) from Cavia porcellus (Guinea pig).